A 427-amino-acid chain; its full sequence is Serine hydroxymethyltransferase (427 aa).

(6S)-5,6,7,8-tetrahydrofolate is bound by residues Leu-122 and 126 to 128 (GHL). Lys-231 is subject to N6-(pyridoxal phosphate)lysine. 355–357 (SPF) contacts (6S)-5,6,7,8-tetrahydrofolate.

The protein belongs to the SHMT family. As to quaternary structure, homodimer. Requires pyridoxal 5'-phosphate as cofactor.

The protein localises to the cytoplasm. It catalyses the reaction (6R)-5,10-methylene-5,6,7,8-tetrahydrofolate + glycine + H2O = (6S)-5,6,7,8-tetrahydrofolate + L-serine. It functions in the pathway one-carbon metabolism; tetrahydrofolate interconversion. Its pathway is amino-acid biosynthesis; glycine biosynthesis; glycine from L-serine: step 1/1. Its function is as follows. Catalyzes the reversible interconversion of serine and glycine with tetrahydrofolate (THF) serving as the one-carbon carrier. This reaction serves as the major source of one-carbon groups required for the biosynthesis of purines, thymidylate, methionine, and other important biomolecules. Also exhibits THF-independent aldolase activity toward beta-hydroxyamino acids, producing glycine and aldehydes, via a retro-aldol mechanism. This is Serine hydroxymethyltransferase from Synechococcus sp. (strain ATCC 27144 / PCC 6301 / SAUG 1402/1) (Anacystis nidulans).